Consider the following 386-residue polypeptide: Probable pectin lyase F (386 aa).

Residues 1 to 16 (MKTAVLSLLLALQAYA) form the signal peptide. Residues Cys-77 and Cys-101 are joined by a disulfide bond. A glycan (N-linked (GlcNAc...) asparagine) is linked at Asn-124. Residue Arg-251 is part of the active site. Cys-326 and Cys-334 are oxidised to a cystine.

It belongs to the polysaccharide lyase 1 family.

Its subcellular location is the secreted. The enzyme catalyses Eliminative cleavage of (1-&gt;4)-alpha-D-galacturonan methyl ester to give oligosaccharides with 4-deoxy-6-O-methyl-alpha-D-galact-4-enuronosyl groups at their non-reducing ends.. Pectinolytic enzymes consist of four classes of enzymes: pectin lyase, polygalacturonase, pectin methylesterase and rhamnogalacturonase. Among pectinolytic enzymes, pectin lyase is the most important in depolymerization of pectin, since it cleaves internal glycosidic bonds of highly methylated pectins. This chain is Probable pectin lyase F (pelF), found in Neosartorya fischeri (strain ATCC 1020 / DSM 3700 / CBS 544.65 / FGSC A1164 / JCM 1740 / NRRL 181 / WB 181) (Aspergillus fischerianus).